Consider the following 411-residue polypeptide: Protein Brevis radix-like 2 (411 aa).

Disordered regions lie at residues 10 to 31 and 103 to 149; these read KDGGEGGHRSATATPNSGKSLT and AAPS…DDDE. The segment covering 20-31 has biased composition (polar residues); the sequence is ATATPNSGKSLT. Residues 136–149 show a composition bias toward acidic residues; sequence GEEDYDDDDDDDDE. The region spanning 161–217 is the BRX 1 domain; it reads REWTAQVEPGVQITFVSIPGGAGNDLKRIRFSREMFNKWEAQRWWGENYDRVVELYN. 2 disordered regions span residues 245–294 and 324–346; these read SRVG…VAAA and AGPAAPYDPSRGTTSSRDEASVS. The span at 276 to 294 shows a compositional bias: low complexity; that stretch reads SRTASSKAQLSSSSSVAAA. Residues 356 to 411 form the BRX 2 domain; it reads TEWVEQDEPGVSITIREFGDGTRELRRVRFSRERFGEERAKVWWEQNRDRIHAQYL.

Belongs to the BRX family.

Its subcellular location is the nucleus. In Oryza sativa subsp. japonica (Rice), this protein is Protein Brevis radix-like 2 (BRXL2).